Reading from the N-terminus, the 1446-residue chain is E3 ubiquitin-protein ligase listerin (1446 aa).

HEAT repeat units lie at residues 71 to 108 (QTRE…LTTD), 115 to 153 (MLTM…VTNG), 324 to 361 (SLQK…LLQK), 363 to 399 (ENPA…TFSD), 413 to 450 (EILK…WIIE), 630 to 669 (AENV…AEDE), 684 to 721 (GDFE…FCDA), 1046 to 1083 (LRAL…PAFQ), 1107 to 1144 (SVAR…KLSL), 1165 to 1202 (LLDL…NALN), and 1251 to 1289 (FKSM…RLLI). An RING-type zinc finger spans residues 1395–1442 (CTICMMTVHQQTHQLPKIKCKQCKNKFHSNCLYKWFESSNQSTCPLCR).

Belongs to the LTN1 family. In terms of assembly, component of the ribosome quality control complex (RQC), composed of at least the E3 ubiquitin ligase ltn1 and nemf. The complex probably also contains tcf25 as well as vcp/p97 and its ubiquitin-binding cofactors. RQC forms a stable complex with 60S ribosomal subunits.

It localises to the cytoplasm. It is found in the cytosol. The catalysed reaction is S-ubiquitinyl-[E2 ubiquitin-conjugating enzyme]-L-cysteine + [acceptor protein]-L-lysine = [E2 ubiquitin-conjugating enzyme]-L-cysteine + N(6)-ubiquitinyl-[acceptor protein]-L-lysine.. It functions in the pathway protein modification; protein ubiquitination. Functionally, E3 ubiquitin-protein ligase. Component of the ribosome quality control complex (RQC), a ribosome-associated complex that mediates ubiquitination and extraction of incompletely synthesized nascent chains for proteasomal degradation. Ubiquitination leads to vcp/p97 recruitment for extraction and degradation of the incomplete translation product. The polypeptide is E3 ubiquitin-protein ligase listerin (Caenorhabditis elegans).